The chain runs to 478 residues: Noelin-2 (478 aa).

The first 16 residues, M1 to A16, serve as a signal peptide directing secretion. N-linked (GlcNAc...) asparagine glycans are attached at residues N33, N98, N179, N299, N334, N423, and N465. Coiled coils occupy residues S86–R109 and L160–G218. Residues G218–H470 form the Olfactomedin-like domain. C219 and C401 are oxidised to a cystine.

Peripherally associated with AMPAR complex. AMPAR complex consists of an inner core made of 4 pore-forming GluA/GRIA proteins (GRIA1, GRIA2, GRIA3 and GRIA4) and 4 major auxiliary subunits arranged in a twofold symmetry. One of the two pairs of distinct binding sites is occupied either by CNIH2, CNIH3 or CACNG2, CACNG3. The other harbors CACNG2, CACNG3, CACNG4, CACNG8 or GSG1L. This inner core of AMPAR complex is complemented by outer core constituents binding directly to the GluA/GRIA proteins at sites distinct from the interaction sites of the inner core constituents. Outer core constituents include at least PRRT1, PRRT2, CKAMP44/SHISA9, FRRS1L and NRN1. The proteins of the inner and outer core serve as a platform for other, more peripherally associated AMPAR constituents, including OLFM2. Alone or in combination, these auxiliary subunits control the gating and pharmacology of the AMPAR complex and profoundly impact their biogenesis and protein processing. Interacts with GRIA2. Interacts with OLFM1 and OLFM3. Interacts with SRF; the interaction promotes dissociation of SRF from the transcriptional repressor HEY2. Interacts with RUNX2. Expressed in the brain (at protein level). Expressed in carotid arteries and the aorta, mainly in aortic SMCs.

The protein resides in the secreted. It is found in the synapse. The protein localises to the membrane. It localises to the nucleus. Its subcellular location is the cytoplasm. Involved in transforming growth factor beta (TGF-beta)-induced smooth muscle differentiation. TGF-beta induces expression and nuclear translocation of OLFM2 where it binds to SRF, causing its dissociation from the transcriptional repressor HEY2/HERP1 and facilitating binding of SRF to target genes. Plays a role in AMPAR complex organization. Is a regulator of vascular smooth-muscle cell (SMC) phenotypic switching, that acts by promoting RUNX2 and inhibiting MYOCD binding to SRF. SMC phenotypic switching is the process through which vascular SMCs undergo transition between a quiescent contractile phenotype and a proliferative synthetic phenotype in response to pathological stimuli. SMC phenotypic plasticity is essential for vascular development and remodeling. The sequence is that of Noelin-2 (Olfm2) from Rattus norvegicus (Rat).